The primary structure comprises 209 residues: Octanoyltransferase (209 aa).

The region spanning 29-209 (EHTPDELWVV…CHQLQPEIDS (181 aa)) is the BPL/LPL catalytic domain. Substrate contacts are provided by residues 71 to 78 (RGGQVTYH), 138 to 140 (SLG), and 151 to 153 (GLA). C169 (acyl-thioester intermediate) is an active-site residue.

Belongs to the LipB family.

It localises to the cytoplasm. It carries out the reaction octanoyl-[ACP] + L-lysyl-[protein] = N(6)-octanoyl-L-lysyl-[protein] + holo-[ACP] + H(+). It functions in the pathway protein modification; protein lipoylation via endogenous pathway; protein N(6)-(lipoyl)lysine from octanoyl-[acyl-carrier-protein]: step 1/2. Catalyzes the transfer of endogenously produced octanoic acid from octanoyl-acyl-carrier-protein onto the lipoyl domains of lipoate-dependent enzymes. Lipoyl-ACP can also act as a substrate although octanoyl-ACP is likely to be the physiological substrate. In Hydrogenovibrio crunogenus (strain DSM 25203 / XCL-2) (Thiomicrospira crunogena), this protein is Octanoyltransferase.